The primary structure comprises 133 residues: Nucleoside diphosphate kinase (133 aa).

ATP contacts are provided by Lys9, Phe57, Arg85, Thr91, Arg102, and Asn112. His115 acts as the Pros-phosphohistidine intermediate in catalysis.

The protein belongs to the NDK family. Requires Mg(2+) as cofactor.

Its subcellular location is the cytoplasm. It carries out the reaction a 2'-deoxyribonucleoside 5'-diphosphate + ATP = a 2'-deoxyribonucleoside 5'-triphosphate + ADP. The catalysed reaction is a ribonucleoside 5'-diphosphate + ATP = a ribonucleoside 5'-triphosphate + ADP. Functionally, major role in the synthesis of nucleoside triphosphates other than ATP. The ATP gamma phosphate is transferred to the NDP beta phosphate via a ping-pong mechanism, using a phosphorylated active-site intermediate. This is Nucleoside diphosphate kinase from Methanococcus maripaludis (strain DSM 14266 / JCM 13030 / NBRC 101832 / S2 / LL).